We begin with the raw amino-acid sequence, 378 residues long: Monomethylxanthine methyltransferase 1 (378 aa).

S-adenosyl-L-homocysteine contacts are provided by tyrosine 18, cysteine 61, asparagine 66, aspartate 100, leucine 101, serine 139, phenylalanine 140, and cysteine 156. Tyrosine 157, histidine 160, and tryptophan 161 together coordinate theobromine. Residues asparagine 178, aspartate 260, phenylalanine 262, and asparagine 263 each coordinate Mg(2+). Position 362 (tyrosine 362) interacts with theobromine.

It belongs to the methyltransferase superfamily. Type-7 methyltransferase family. Requires Mg(2+) as cofactor. As to expression, expressed, at low levels, in stems, young leaves, floral buds and immature fruits (grains), but not in roots, old leaves and mature fruits.

The protein localises to the cytoplasm. It carries out the reaction 7-methylxanthine + S-adenosyl-L-methionine = theobromine + S-adenosyl-L-homocysteine + H(+). It functions in the pathway alkaloid biosynthesis. Involved in the biosynthesis of caffeine. Catalyzes the conversion of 7-methylxanthine (7mX) to theobromine and of paraxanthine to caffeine. Has a 5-fold preference for 7mX. The polypeptide is Monomethylxanthine methyltransferase 1 (Coffea arabica (Arabian coffee)).